Reading from the N-terminus, the 237-residue chain is Ribonuclease PH (237 aa).

Phosphate contacts are provided by residues R86 and 124–126 (GTR).

This sequence belongs to the RNase PH family. As to quaternary structure, homohexameric ring arranged as a trimer of dimers.

The enzyme catalyses tRNA(n+1) + phosphate = tRNA(n) + a ribonucleoside 5'-diphosphate. Functionally, phosphorolytic 3'-5' exoribonuclease that plays an important role in tRNA 3'-end maturation. Removes nucleotide residues following the 3'-CCA terminus of tRNAs; can also add nucleotides to the ends of RNA molecules by using nucleoside diphosphates as substrates, but this may not be physiologically important. Probably plays a role in initiation of 16S rRNA degradation (leading to ribosome degradation) during starvation. The polypeptide is Ribonuclease PH (Shewanella sp. (strain ANA-3)).